A 555-amino-acid polypeptide reads, in one-letter code: ATP-dependent RNA helicase MRH4, mitochondrial (555 aa).

The transit peptide at 1-25 (MFKLLIPNKYNYVIRPLVRFKSIKS) directs the protein to the mitochondrion. A Q motif motif is present at residues 101-108 (DIKPTPVQ). The Helicase ATP-binding domain occupies 144-361 (ANEIQKTKVF…SKLFPDQRSL (218 aa)). Residue 157–164 (AETGSGKT) coordinates ATP. The DEAD box motif lies at 309-312 (DEAD). The Helicase C-terminal domain occupies 395–555 (CLAQALYAIS…NAIIRGLRIG (161 aa)).

Belongs to the DEAD box helicase family. MRH4 subfamily.

The protein localises to the mitochondrion. It carries out the reaction ATP + H2O = ADP + phosphate + H(+). In terms of biological role, ATP-binding RNA helicase involved in mitochondrial RNA metabolism. Required for maintenance of mitochondrial DNA. The chain is ATP-dependent RNA helicase MRH4, mitochondrial (MRH4) from Candida albicans (strain SC5314 / ATCC MYA-2876) (Yeast).